The sequence spans 380 residues: Type 4 apparatus protein DotM (380 aa).

Helical transmembrane passes span 18–38 (MAPV…WALA) and 99–119 (YPVI…NVTL).

In terms of assembly, the T4BSS is a complex nanomachine composed of several subcomplexes. This subunit is part of the Type IV Coupling Complex (T4CC), a subcomplex composed of the DotLMNYZ core and the IcmSW-LvgA adapter subunits, linked by the C-terminal tail of DotL. Six DotLMNYZ hetero-pentameric units may assemble into a hexameric nanomachine, forming an inner membrane channel for effectors to pass through. Interacts directly with DotL.

The protein resides in the cell inner membrane. In terms of biological role, component of the Dot/Icm type IVB secretion system (T4BSS), which is used to inject bacterial effector proteins into eukaryotic host cells. Part of a subcomplex which recruits effector proteins and delivers them to the core transmembrane subcomplex. Forms the interacting surface for recruitment of acidic Glu-rich motif-containing effectors. The sequence is that of Type 4 apparatus protein DotM from Legionella pneumophila subsp. pneumophila (strain Philadelphia 1 / ATCC 33152 / DSM 7513).